Reading from the N-terminus, the 350-residue chain is Purine-rich element-binding protein gamma (350 aa).

2 disordered regions span residues 1 to 59 and 136 to 172; these read MERA…GTSE and GHRQEHGQSKEQVSRRRQKHSAPSPPVSVGSEEHPHS. Over residues 9 to 27 the composition is skewed to gly residues; that stretch reads GGGSGGGRGRGGKNVGGPG. A compositionally biased stretch (polar residues) spans 47-59; sequence ASATPNQSGGTSE. The DNA-binding element occupies 54–296; it reads SGGTSEIQEL…GIFLKVSEVR (243 aa). Over residues 137 to 149 the composition is skewed to basic and acidic residues; it reads HRQEHGQSKEQVS. Phosphoserine occurs at positions 163, 166, and 342.

Belongs to the PUR DNA-binding protein family. Isoform 1 is expressed in testis. Isoform 2 is expressed in blastocyst and kidney.

It localises to the nucleus. In Mus musculus (Mouse), this protein is Purine-rich element-binding protein gamma (Purg).